We begin with the raw amino-acid sequence, 383 residues long: Succinyl-diaminopimelate desuccinylase (383 aa).

H69 is a binding site for Zn(2+). Residue D71 is part of the active site. D103 serves as a coordination point for Zn(2+). E137 acts as the Proton acceptor in catalysis. 3 residues coordinate Zn(2+): E138, E166, and H357.

This sequence belongs to the peptidase M20A family. DapE subfamily. In terms of assembly, homodimer. It depends on Zn(2+) as a cofactor. Requires Co(2+) as cofactor.

The catalysed reaction is N-succinyl-(2S,6S)-2,6-diaminopimelate + H2O = (2S,6S)-2,6-diaminopimelate + succinate. The protein operates within amino-acid biosynthesis; L-lysine biosynthesis via DAP pathway; LL-2,6-diaminopimelate from (S)-tetrahydrodipicolinate (succinylase route): step 3/3. Functionally, catalyzes the hydrolysis of N-succinyl-L,L-diaminopimelic acid (SDAP), forming succinate and LL-2,6-diaminopimelate (DAP), an intermediate involved in the bacterial biosynthesis of lysine and meso-diaminopimelic acid, an essential component of bacterial cell walls. This is Succinyl-diaminopimelate desuccinylase from Rickettsia typhi (strain ATCC VR-144 / Wilmington).